A 648-amino-acid chain; its full sequence is DNA gyrase subunit B (648 aa).

The Toprim domain occupies 427-541 (TELFIVEGDS…AGYVYIAQPP (115 aa)). The Mg(2+) site is built by Glu433, Asp506, and Asp508.

Belongs to the type II topoisomerase GyrB family. In terms of assembly, heterotetramer, composed of two GyrA and two GyrB chains. In the heterotetramer, GyrA contains the active site tyrosine that forms a transient covalent intermediate with DNA, while GyrB binds cofactors and catalyzes ATP hydrolysis. The cofactor is Mg(2+). It depends on Mn(2+) as a cofactor. Requires Ca(2+) as cofactor.

The protein localises to the cytoplasm. It catalyses the reaction ATP-dependent breakage, passage and rejoining of double-stranded DNA.. Functionally, a type II topoisomerase that negatively supercoils closed circular double-stranded (ds) DNA in an ATP-dependent manner to modulate DNA topology and maintain chromosomes in an underwound state. Negative supercoiling favors strand separation, and DNA replication, transcription, recombination and repair, all of which involve strand separation. Also able to catalyze the interconversion of other topological isomers of dsDNA rings, including catenanes and knotted rings. Type II topoisomerases break and join 2 DNA strands simultaneously in an ATP-dependent manner. The sequence is that of DNA gyrase subunit B from Streptococcus pneumoniae serotype 4 (strain ATCC BAA-334 / TIGR4).